Here is a 385-residue protein sequence, read N- to C-terminus: Putative glutamate--cysteine ligase 2 (385 aa).

Belongs to the glutamate--cysteine ligase type 2 family. YbdK subfamily.

It carries out the reaction L-cysteine + L-glutamate + ATP = gamma-L-glutamyl-L-cysteine + ADP + phosphate + H(+). ATP-dependent carboxylate-amine ligase which exhibits weak glutamate--cysteine ligase activity. In Herpetosiphon aurantiacus (strain ATCC 23779 / DSM 785 / 114-95), this protein is Putative glutamate--cysteine ligase 2.